The chain runs to 938 residues: Isoleucine--tRNA ligase (938 aa).

Residues 58-68 carry the 'HIGH' region motif; the sequence is PYANGSIHIGH. Position 183 is an N6-acetyllysine (lysine 183). Glutamate 561 is an L-isoleucyl-5'-AMP binding site. The 'KMSKS' region signature appears at 602 to 606; that stretch reads KMSKS. Lysine 605 serves as a coordination point for ATP. Zn(2+) is bound by residues cysteine 901, cysteine 904, cysteine 921, and cysteine 924.

The protein belongs to the class-I aminoacyl-tRNA synthetase family. IleS type 1 subfamily. As to quaternary structure, monomer. Zn(2+) is required as a cofactor.

The protein resides in the cytoplasm. The enzyme catalyses tRNA(Ile) + L-isoleucine + ATP = L-isoleucyl-tRNA(Ile) + AMP + diphosphate. Its function is as follows. Catalyzes the attachment of isoleucine to tRNA(Ile). As IleRS can inadvertently accommodate and process structurally similar amino acids such as valine, to avoid such errors it has two additional distinct tRNA(Ile)-dependent editing activities. One activity is designated as 'pretransfer' editing and involves the hydrolysis of activated Val-AMP. The other activity is designated 'posttransfer' editing and involves deacylation of mischarged Val-tRNA(Ile). The polypeptide is Isoleucine--tRNA ligase (Escherichia fergusonii (strain ATCC 35469 / DSM 13698 / CCUG 18766 / IAM 14443 / JCM 21226 / LMG 7866 / NBRC 102419 / NCTC 12128 / CDC 0568-73)).